Reading from the N-terminus, the 360-residue chain is Phospho-N-acetylmuramoyl-pentapeptide-transferase (360 aa).

The next 10 membrane-spanning stretches (helical) occupy residues 26 to 46 (AILGVMTALGLSLLLGPWVIN), 70 to 90 (GTPTMGGTLILFAIVFATLLW), 97 to 117 (YVLAVLFVTLSFGLVGWVDDY), 134 to 154 (YFWQSLAGFTVAYGLYVTAQI), 167 to 187 (GVALELGVFYIILTYFMVVGF), 199 to 219 (GLAIMPTVMVGSALGIIAYLV), 236 to 256 (AGELVVYCAALAGAGLGFLWF), 263 to 283 (VFMGDVGALALGAALGIIAVI), 288 to 308 (IVFIIMSGIFVMETVSVILQV), and 338 to 358 (VIVRFWIITVMLVLFGLATLK).

It belongs to the glycosyltransferase 4 family. MraY subfamily. Mg(2+) is required as a cofactor.

The protein resides in the cell inner membrane. The catalysed reaction is UDP-N-acetyl-alpha-D-muramoyl-L-alanyl-gamma-D-glutamyl-meso-2,6-diaminopimeloyl-D-alanyl-D-alanine + di-trans,octa-cis-undecaprenyl phosphate = di-trans,octa-cis-undecaprenyl diphospho-N-acetyl-alpha-D-muramoyl-L-alanyl-D-glutamyl-meso-2,6-diaminopimeloyl-D-alanyl-D-alanine + UMP. Its pathway is cell wall biogenesis; peptidoglycan biosynthesis. Catalyzes the initial step of the lipid cycle reactions in the biosynthesis of the cell wall peptidoglycan: transfers peptidoglycan precursor phospho-MurNAc-pentapeptide from UDP-MurNAc-pentapeptide onto the lipid carrier undecaprenyl phosphate, yielding undecaprenyl-pyrophosphoryl-MurNAc-pentapeptide, known as lipid I. This is Phospho-N-acetylmuramoyl-pentapeptide-transferase from Saccharophagus degradans (strain 2-40 / ATCC 43961 / DSM 17024).